Reading from the N-terminus, the 556-residue chain is Urocanate hydratase (556 aa).

NAD(+) contacts are provided by residues glycine 52–glycine 53, glutamine 130, glycine 176–glycine 178, glutamate 196, arginine 201, asparagine 242–alanine 243, glutamine 263–histidine 267, tyrosine 273–leucine 274, and tyrosine 322. Residue cysteine 410 is part of the active site. Glycine 492 contributes to the NAD(+) binding site.

This sequence belongs to the urocanase family. The cofactor is NAD(+).

The protein resides in the cytoplasm. The enzyme catalyses 4-imidazolone-5-propanoate = trans-urocanate + H2O. It functions in the pathway amino-acid degradation; L-histidine degradation into L-glutamate; N-formimidoyl-L-glutamate from L-histidine: step 2/3. Catalyzes the conversion of urocanate to 4-imidazolone-5-propionate. The chain is Urocanate hydratase from Shewanella sp. (strain MR-7).